We begin with the raw amino-acid sequence, 350 residues long: Small ribosomal subunit biogenesis GTPase RsgA (350 aa).

Positions 1-17 (MSKNKLSKGQQRRVNAN) are enriched in polar residues. The segment at 1-33 (MSKNKLSKGQQRRVNANHQRRLKTSKEKPDYDD) is disordered. The CP-type G domain occupies 104-273 (TSVLTRPDFY…VIDSPGVREF (170 aa)). GTP-binding positions include 160–163 (NKID) and 214–222 (GQSGVGKSS). Cysteine 297, cysteine 302, histidine 304, and cysteine 310 together coordinate Zn(2+).

It belongs to the TRAFAC class YlqF/YawG GTPase family. RsgA subfamily. As to quaternary structure, monomer. Associates with 30S ribosomal subunit, binds 16S rRNA. Zn(2+) is required as a cofactor.

Its subcellular location is the cytoplasm. Its function is as follows. One of several proteins that assist in the late maturation steps of the functional core of the 30S ribosomal subunit. Helps release RbfA from mature subunits. May play a role in the assembly of ribosomal proteins into the subunit. Circularly permuted GTPase that catalyzes slow GTP hydrolysis, GTPase activity is stimulated by the 30S ribosomal subunit. This Escherichia coli (strain SMS-3-5 / SECEC) protein is Small ribosomal subunit biogenesis GTPase RsgA.